The chain runs to 385 residues: Tyrosine--tRNA ligase 1, cytoplasmic (385 aa).

Positions 77 to 85 (PSGRMHIAQ) match the 'HIGH' region motif. Residues Y200, Q204, D207, and Q222 each contribute to the L-tyrosine site. Positions 259 to 263 (KMSKS) match the 'KMSKS' region motif. K262 contributes to the ATP binding site.

The protein belongs to the class-I aminoacyl-tRNA synthetase family.

The protein localises to the cytoplasm. Its subcellular location is the cytosol. The catalysed reaction is tRNA(Tyr) + L-tyrosine + ATP = L-tyrosyl-tRNA(Tyr) + AMP + diphosphate + H(+). Functionally, catalyzes the attachment of tyrosine to tRNA(Tyr) in a two-step reaction: tyrosine is first activated by ATP to form Tyr-AMP and then transferred to the acceptor end of tRNA(Tyr). This Arabidopsis thaliana (Mouse-ear cress) protein is Tyrosine--tRNA ligase 1, cytoplasmic.